The primary structure comprises 581 residues: MVFRNVGRPPEEEDVEAAPEPGPSELLCPRHRCALDPKALPPGLALERTWGPAAGLEAQLAALGLGQPAGPGVKTVGGGCCPCPCPPQPPPPQPQPPAAAPQAGEDPTETSDALLVLEGLESEAESLETNSCSEEELSSPGRGGGGGGRLLLQPPGPELPPVPFPLQDLVPLGRLSRGEQQQQQQQQPPPPPPPPGPLRPLAGPSRKGSFKIRLSRLFRTKSCNGGSGGGDGTGKRPSGELAASAASLTDMGGSAGRELDAGRKPKLTRTQSAFSPVSFSPLFTGETVSLVDVDISQRGLTSPHPPTPPPPPRRSLSLLDDISGTLPTSVLVAPMGSSLQSFPLPPPPPPHAPDAFPRIAPIRAAESLHSQPPQHLQCPLYRPDSSSFAASLRELEKCGWYWGPMNWEDAEMKLKGKPDGSFLVRDSSDPRYILSLSFRSQGITHHTRMEHYRGTFSLWCHPKFEDRCQSVVEFIKRAIMHSKNGKFLYFLRSRVPGLPPTPVQLLYPVSRFSNVKSLQHLCRFRIRQLVRIDHIPDLPLPKPLISYIRKFYYYDPQEEVYLSLKEAQLISKQKQEVEPST.

4 disordered regions span residues 1-23 (MVFR…EPGP), 89-109 (PPPP…DPTE), 123-272 (EAES…RTQS), and 297-316 (QRGL…RRSL). Pro residues-rich tracts occupy residues 89-99 (PPPPQPQPPAA), 154-164 (PPGPELPPVPF), and 187-198 (QPPPPPPPPGPL). Residues 124 to 494 (AESLETNSCS…GKFLYFLRSR (371 aa)) form a mediates interaction with SORBS3 region. Basic residues predominate over residues 208–219 (GSFKIRLSRLFR). Positions 303–313 (PHPPTPPPPPR) are enriched in pro residues. One can recognise an SH2 domain in the interval 400 to 509 (WYWGPMNWED…PTPVQLLYPV (110 aa)). In terms of domain architecture, SOCS box spans 504–554 (QLLYPVSRFSNVKSLQHLCRFRIRQLVRIDHIPDLPLPKPLISYIRKFYYY).

Substrate-recognition component of the ECS(SOCS7) complex, composed of SOCS7, CUL5, ELOB, ELOC and RNF7/RBX2. Interacts, via the third proline-rich region, with the second SH3 domain of the adapter protein NCK1. Also interacts with GRB2, INSR, PLCG1, SORBS3/vinexin, and phosphorylated STAT3 and STAT5. Interacts with SEPT6. Interacts with phosphorylated IRS4 and PIK3R1. Expressed in brain and leukocytes. Also in fetal lung fibroblasts and fetal brain.

The protein localises to the cytoplasm. Its subcellular location is the nucleus. It is found in the cell membrane. Its pathway is protein modification; protein ubiquitination. Its function is as follows. Substrate-recognition component of a cullin-5-RING E3 ubiquitin-protein ligase complex (ECS complex, also named CRL5 complex), which mediates the ubiquitination and subsequent proteasomal degradation of target proteins, such as DAB1 and IRS1. Specifically recognizes and binds phosphorylated proteins via its SH2 domain, promoting their ubiquitination. The ECS(SOCS7) complex acts as a key regulator of reelin signaling by mediating ubiquitination and degradation of phosphorylated DAB1 in the cortical plate of the developing cerebral cortex, thereby regulating neuron positioning during cortex development. Functions in insulin signaling and glucose homeostasis through IRS1 ubiquitination and subsequent proteasomal degradation. Also inhibits prolactin, growth hormone and leptin signaling by preventing STAT3 and STAT5 activation, sequestering them in the cytoplasm and reducing their binding to DNA. This is Suppressor of cytokine signaling 7 from Homo sapiens (Human).